Reading from the N-terminus, the 368-residue chain is Glycine betaine monooxygenase reductase subunit (368 aa).

The FAD-binding FR-type domain occupies 16–119 (NGRHNVRCVK…HGPVGDFNVI (104 aa)). Positions 284–368 (LQVEFSNSGK…TPKSHVAIEF (85 aa)) constitute a 2Fe-2S ferredoxin-type domain. Residues cysteine 318, cysteine 323, cysteine 326, and cysteine 356 each coordinate [2Fe-2S] cluster.

It in the N-terminal section; belongs to the FAD-binding oxidoreductase type 6 family. In terms of assembly, monomer. The system is composed of an oxygenase subunit (BmoA) and a reductase subunit (BmoB). Maximal specific activity is obtained when the ratio of BmoA to BmoB is 5:1. The cofactor is FAD. [2Fe-2S] cluster serves as cofactor.

It catalyses the reaction glycine betaine + NADH + O2 + H(+) = N,N-dimethylglycine + formaldehyde + NAD(+) + H2O. Involved in degradation of glycine betaine. Part of a Rieske-type oxygenase system that catalyzes the conversion of glycine betaine (GB) to dimethylglycine (DMG). This subunit is the ferredoxin reductase component of the system. NADH is the preferred electron donor. The chain is Glycine betaine monooxygenase reductase subunit from Chromohalobacter salexigens (strain ATCC BAA-138 / DSM 3043 / CIP 106854 / NCIMB 13768 / 1H11).